The primary structure comprises 323 residues: Acetyl-coenzyme A carboxylase carboxyl transferase subunit alpha (323 aa).

Residues Leu-40–Thr-293 form the CoA carboxyltransferase C-terminal domain.

Belongs to the AccA family. Acetyl-CoA carboxylase is a heterohexamer composed of biotin carboxyl carrier protein (AccB), biotin carboxylase (AccC) and two subunits each of ACCase subunit alpha (AccA) and ACCase subunit beta (AccD).

It is found in the cytoplasm. The catalysed reaction is N(6)-carboxybiotinyl-L-lysyl-[protein] + acetyl-CoA = N(6)-biotinyl-L-lysyl-[protein] + malonyl-CoA. The protein operates within lipid metabolism; malonyl-CoA biosynthesis; malonyl-CoA from acetyl-CoA: step 1/1. Functionally, component of the acetyl coenzyme A carboxylase (ACC) complex. First, biotin carboxylase catalyzes the carboxylation of biotin on its carrier protein (BCCP) and then the CO(2) group is transferred by the carboxyltransferase to acetyl-CoA to form malonyl-CoA. The protein is Acetyl-coenzyme A carboxylase carboxyl transferase subunit alpha of Polynucleobacter necessarius subsp. necessarius (strain STIR1).